The chain runs to 124 residues: Small ribosomal subunit protein uS12 (124 aa).

A 3-methylthioaspartic acid modification is found at Asp-90.

Belongs to the universal ribosomal protein uS12 family. In terms of assembly, part of the 30S ribosomal subunit. Contacts proteins S8 and S17. May interact with IF1 in the 30S initiation complex.

Functionally, with S4 and S5 plays an important role in translational accuracy. In terms of biological role, interacts with and stabilizes bases of the 16S rRNA that are involved in tRNA selection in the A site and with the mRNA backbone. Located at the interface of the 30S and 50S subunits, it traverses the body of the 30S subunit contacting proteins on the other side and probably holding the rRNA structure together. The combined cluster of proteins S8, S12 and S17 appears to hold together the shoulder and platform of the 30S subunit. This chain is Small ribosomal subunit protein uS12, found in Wolbachia sp. subsp. Brugia malayi (strain TRS).